Here is a 603-residue protein sequence, read N- to C-terminus: Aspartate--tRNA(Asp/Asn) ligase (603 aa).

The tract at residues 205-208 (QLFK) is aspartate. R227 provides a ligand contact to L-aspartate. ATP is bound by residues 227–229 (RDE) and Q236. H463 provides a ligand contact to L-aspartate. E497 is an ATP binding site. R504 contacts L-aspartate. 549-552 (GMDR) contacts ATP.

Belongs to the class-II aminoacyl-tRNA synthetase family. Type 1 subfamily. Homodimer.

Its subcellular location is the cytoplasm. The enzyme catalyses tRNA(Asx) + L-aspartate + ATP = L-aspartyl-tRNA(Asx) + AMP + diphosphate. Its function is as follows. Aspartyl-tRNA synthetase with relaxed tRNA specificity since it is able to aspartylate not only its cognate tRNA(Asp) but also tRNA(Asn). Reaction proceeds in two steps: L-aspartate is first activated by ATP to form Asp-AMP and then transferred to the acceptor end of tRNA(Asp/Asn). This Anaeromyxobacter sp. (strain K) protein is Aspartate--tRNA(Asp/Asn) ligase.